The sequence spans 367 residues: mRNA-decapping enzyme-like protein (367 aa).

Disordered stretches follow at residues 144-179, 196-246, and 299-333; these read PKAS…RDAP, NTAS…SSSP, and PNNA…PTGP. The segment covering 196-211 has biased composition (polar residues); that stretch reads NTASGSASGPYQSSAI. The segment covering 212–234 has biased composition (low complexity); it reads PHQPHQPHQPTIAPPVAAAAPPQ. The span at 299–309 shows a compositional bias: polar residues; it reads PNNASHQQRSY. Positions 315 to 331 are enriched in pro residues; sequence QPFPPPTPPPSLAPAPT.

This sequence belongs to the DCP1 family. Homodimer. Component of the decapping complex. Interacts with DCP2 and DCP5. Interacts with BCHA1. As to expression, expressed in seedlings, mostly in root tips, root hairs, and the vascular system. Also present in roots, leaves, stems, and flowers.

The protein localises to the cytoplasm. It is found in the P-body. As a component of the decapping complex, involved in the degradation of mRNAs. Essential for postembryonic development. This is mRNA-decapping enzyme-like protein from Arabidopsis thaliana (Mouse-ear cress).